Consider the following 660-residue polypeptide: Probable beta-hexosaminidase fdl (660 aa).

A signal peptide spans 1-36; the sequence is MSLAVSLRRALLVLLTGAIFILTVLYWNQGVTKAQA. N210, N412, and N452 each carry an N-linked (GlcNAc...) asparagine glycan.

This sequence belongs to the glycosyl hydrolase 20 family. As to expression, in third instar larval and early pupal brains, expressed in cells sending projections across the interhemispheric junction. In adult brain, expressed in mushroom body, ellipsoid body and pars intercerebralis.

It carries out the reaction Hydrolysis of terminal non-reducing N-acetyl-D-hexosamine residues in N-acetyl-beta-D-hexosaminides.. Functionally, involved in brain restructurization via hormonal control during metamorphosis. Implicated in N-glycan processing. The chain is Probable beta-hexosaminidase fdl (fdl) from Drosophila melanogaster (Fruit fly).